The primary structure comprises 82 residues: Beta-defensin 119 (82 aa).

The N-terminal stretch at 1–19 is a signal peptide; sequence MKFFLFFVILLAMEPVISG. 3 cysteine pairs are disulfide-bonded: C26–C53, C33–C47, and C37–C54.

Belongs to the beta-defensin family.

The protein resides in the secreted. Its function is as follows. Has antibacterial activity. This chain is Beta-defensin 119 (DEFB119), found in Canis lupus familiaris (Dog).